Reading from the N-terminus, the 353-residue chain is Probable dual-specificity RNA methyltransferase RlmN (353 aa).

Catalysis depends on Glu-104, which acts as the Proton acceptor. A Radical SAM core domain is found at 112–341 (DGGRKTICIS…ILNRRSPGKD (230 aa)). Cys-119 and Cys-346 are disulfide-bonded. [4Fe-4S] cluster is bound by residues Cys-126, Cys-130, and Cys-133. S-adenosyl-L-methionine-binding positions include 173–174 (GE), Ser-205, 228–230 (SLN), and Asn-304. The S-methylcysteine intermediate role is filled by Cys-346.

The protein belongs to the radical SAM superfamily. RlmN family. It depends on [4Fe-4S] cluster as a cofactor.

Its subcellular location is the cytoplasm. It catalyses the reaction adenosine(2503) in 23S rRNA + 2 reduced [2Fe-2S]-[ferredoxin] + 2 S-adenosyl-L-methionine = 2-methyladenosine(2503) in 23S rRNA + 5'-deoxyadenosine + L-methionine + 2 oxidized [2Fe-2S]-[ferredoxin] + S-adenosyl-L-homocysteine. The catalysed reaction is adenosine(37) in tRNA + 2 reduced [2Fe-2S]-[ferredoxin] + 2 S-adenosyl-L-methionine = 2-methyladenosine(37) in tRNA + 5'-deoxyadenosine + L-methionine + 2 oxidized [2Fe-2S]-[ferredoxin] + S-adenosyl-L-homocysteine. Specifically methylates position 2 of adenine 2503 in 23S rRNA and position 2 of adenine 37 in tRNAs. The polypeptide is Probable dual-specificity RNA methyltransferase RlmN (Leptospira interrogans serogroup Icterohaemorrhagiae serovar Lai (strain 56601)).